Reading from the N-terminus, the 1104-residue chain is Transient receptor potential cation channel subfamily M member 8 (1104 aa).

The Cytoplasmic segment spans residues 1-733 (MSFEGARLSM…LWYYVAFFTS (733 aa)). The chain crosses the membrane as a helical span at residues 734–758 (PFVVFSWNVVFYIAFLLLFAYVLLM). Topologically, residues 759 to 765 (DFHSVPH) are extracellular. The chain crosses the membrane as a helical span at residues 766–789 (TPELILYALVFVLFCDEVRQWYMN). E782 and Q785 together coordinate Ca(2+). Over 790 to 796 (GVNYFTD) the chain is Cytoplasmic. Residues 797–817 (LWNVMDTLGLFYFIAGIVFRL) traverse the membrane as a helical segment. The Ca(2+) site is built by N799 and D802. At 818 to 822 (HSSNK) the chain is on the extracellular side. Residues 823–848 (SSLYSGRVIFCLDYIIFTLRLIHIFT) form a helical membrane-spanning segment. Residues 849–853 (VSRNL) are Cytoplasmic-facing. A helical transmembrane segment spans residues 854 to 890 (GPKIIMLQRMLIDVFFFLFLFAVWMVAFGVARQGILR). Residues 891-895 (QNEQR) lie on the Extracellular side of the membrane. Positions 896–912 (WRWIFRSVIYEPYLAMF) form an intramembrane region, pore-forming. The Extracellular segment spans residues 913-953 (GQVPSDVDSTTYDFSHCTFSGNESKPLCVELDEYNLPRFPE). Residues 954–984 (WITIPLVCIYMLSTNILLVNLLVAMFGYTVG) traverse the membrane as a helical segment. Residues 985-1104 (IVQENNDQVW…LLKEIANKIK (120 aa)) are Cytoplasmic-facing. The stretch at 1067–1104 (INTKANDNAEEMRHRFRQLDTKLNDLKGLLKEIANKIK) forms a coiled coil.

Belongs to the transient receptor (TC 1.A.4) family. LTrpC subfamily. TRPM8 sub-subfamily. Homotetramer. Interacts (via N-terminus and C-terminus domains) with TCAF1; the interaction stimulates TRPM8 channel activity. Interacts (via N-terminus and C-terminus domains) with TCAF2; the interaction inhibits TRPM8 channel activity. Expressed in dorsal root and trigeminal ganglia. Specifically expressed in a subset of sensory neurons, including cold-sensitive neurons in trigeminal neurons.

It is found in the cell membrane. The protein resides in the membrane raft. It carries out the reaction Ca(2+)(in) = Ca(2+)(out). The enzyme catalyses Na(+)(in) = Na(+)(out). It catalyses the reaction K(+)(in) = K(+)(out). Activated by cold temperatures and by both natural and synthetic cooling compounds such as menthol and icilin. Activation of the channel requires the presence of PI(4,5)P2; PI(4,5)P2 is necessary to gate the channel. Activated by intracellular Ca(2+). Functionally, non-selective ion channel permeable to monovalent and divalent cations, including Na(+), K(+), and Ca(2+), with higher permeability for Ca(2+). Activated by multiple factors, such as temperature, voltage, pressure, and changes in osmolality. Activated by cool temperatures (&lt;23-28 degrees Celsius) and by chemical ligands evoking a sensation of coolness, such as menthol and icilin, therefore plays a central role in the detection of environmental cold temperatures. TRPM8 is a voltage-dependent channel; its activation by cold or chemical ligands shifts its voltage thresholds towards physiological membrane potentials, leading to the opening of the channel. In addition to its critical role in temperature sensing, regulates basal tear secretion by sensing evaporation-induced cooling and changes in osmolality. This Rattus norvegicus (Rat) protein is Transient receptor potential cation channel subfamily M member 8 (Trpm8).